A 1418-amino-acid polypeptide reads, in one-letter code: MIFVGETMERANHSLVRLRREGEELTLDEKAEICSELELQQKYVDIASNIIGDLSSLPMVGKIVGTIAAAAMTVTHVASGRLDIEQTLLGCSDLPFDQIKEVLEKRFNEVDRKLESHSAALEEITKLVEKSISAVEKTRKQMNKRFDEVMKSIQDAKVSPIVSKINNFARYFDTEKERIRGLKLNDYILKLEEPNGILLHFKESRTPKDDSLQAPLFSIIQEGYAVPKSIDDESAFKVLYALLYGTQTYISVMFFLLEQYSFLANHYYEKGDLEKYDEYFNSLNNVFLDFKSSLVGTGTSNNEGLIDKVLQVLMTFKNSEFLGLGKNGVDEMLNEKINLFNKIKEEIESKQRMTMSETPENFAQISFDKDITTPIGDWRDGREVRYAVQYASETLFSKIGHWSDPVSVREKACPTLRMPVDQTRRNVLVFRKFDNSKPQLVGEITPYLSNFIDIDRDLYNAASNPDSAVGFKEFTKLNYDGANIRATFDQGRTIFHAVAKSGNDKILFGLTFLVKSTELNQPDKKGYTPIHVAADSGNAGIVNLLIQRGVSINSKTYHFLQTPLHLAAQRGFVNTFQRLMESSEININERDKDGFTPLHYAVRGGERILEAFMNQIGIDVNAKSNKGLTPFHLAIIKNDWQVASTLLRNKKVDINAVDENNMTALHYAAILGYLETTKQLINLKEINANVVSSPGLLSALHYAILYKHDDVASFLLRSSNVNVNLKALGGITPLHLAVMQGRKQVLSLMFNIGVNIEQQTDEKYTPLHLAAMSKYPELIQILLDQDSNFEAKTNSGATPLHLATFKGKSQAALILLNNEVNWRDTDENGQMPIHGAATTGLLDVAQAIISIDATVLDIEDKNSDTPLNLAAQNSHIDAVKYFIDQGADINTRNKNGHAPLLAFSKKGNLDMVKYLFDKNANVYIADNNGMNFFYYAVRNGHLNIIKYAMSEKDKFEWSNIDNNRRDECPKEECAISHFAVCDAVQFDKIEIVKFFIGTLGNFNICGPLHQAARYGHLHIVKYLVEEEVLSVDGSKTDTPLCYASENGHLAVVQYLVSNGAKVNHDCANGMTAIDKAITKNHLQVVQFLAANGVDFRRKNSRGATPFLTAVAENAFDIAEYLIREKRQDININEQNVDKETALHLAVYYKNLQMIKLLVKYGIDVTIRNAYDKTVLDIATDAKFSNIVKYLKKNSGKFRREYKSSYGEHSFLQTNEISRFIDGKSIEHDHPQFINADNESSQLFSGTASKIDVIGTLLLIDVLIRYFSKQGYISKESDSASDGITQAAALSITEKFEDVLNSLPNKSAKEQVDLADVHGKVYAALKSGRNSQIHQILCSSLKSISTLKPEDMEKLVSVIMNSHSSLSMPEATDSANEAYGETLHLFGESCRHSEDYISQKFSTNPFSFESEKKIQKISI.

The first 20 residues, 1 to 20 (MIFVGETMERANHSLVRLRR), serve as a signal peptide directing secretion. Residues 17–20 (RLRR) form a furin-like endopeptidase recognition region region. The tract at residues 238 to 257 (VLYALLYGTQTYISVMFFLL) is helix H8 is the probable transmembrane region of the tetrameric pore inserted in the target cell membrane. Cysteines 413 and 1066 form a disulfide. ANK repeat units lie at residues 458–489 (LYNAASNPDSAVGFKEFTKLNYDGANIRATFD), 490–521 (QGRTIFHAVAKSGNDKILFGLTFLVKSTELNQ), 525–554 (KGYTPIHVAADSGNAGIVNLLIQRGVSINS), 559–589 (FLQTPLHLAAQRGFVNTFQRLMESSEININE), 593–622 (DGFTPLHYAVRGGERILEAFMNQIGIDVNA), 626–656 (KGLTPFHLAIIKNDWQVASTLLRNKKVDINA), 660–690 (NNMTALHYAAILGYLETTKQLINLKEINANV), 695–723 (GLLSALHYAILYKHDDVASFLLRSSNVNV), 729–758 (GGITPLHLAVMQGRKQVLSLMFNIGVNIEQ), 762–791 (EKYTPLHLAAMSKYPELIQILLDQDSNFEA), 795–824 (SGATPLHLATFKGKSQAALILLNNEVNWRD), 828–857 (NGQMPIHGAATTGLLDVAQAIISIDATVLD), 862–891 (NSDTPLNLAAQNSHIDAVKYFIDQGADINT), 895–924 (NGHAPLLAFSKKGNLDMVKYLFDKNANVYI), 928–957 (NGMNFFYYAVRNGHLNIIKYAMSEKDKFEW), 971–1003 (EECAISHFAVCDAVQFDKIEIVKFFIGTLGNFN), 1004–1033 (ICGPLHQAARYGHLHIVKYLVEEEVLSVDG), 1035–1064 (KTDTPLCYASENGHLAVVQYLVSNGAKVNH), 1068–1097 (NGMTAIDKAITKNHLQVVQFLAANGVDFRR), 1101–1131 (RGATPFLTAVAENAFDIAEYLIREKRQDINI), 1137–1166 (DKETALHLAVYYKNLQMIKLLVKYGIDVTI), and 1170–1199 (YDKTVLDIATDAKFSNIVKYLKKNSGKFRR). The 4C4.1 epitope stretch occupies residues 1026–1032 (EEVLSVD). Residues 1196-1199 (KFRR) are furin-like endopeptidase recognition region. The propeptide occupies 1200-1418 (EYKSSYGEHS…SEKKIQKISI (219 aa)).

This sequence belongs to the cationic peptide 01 (latrotoxin) family. 03 (alpha-latrotoxin) subfamily. Homotetramer in membranes. Post-translationally, processed by furin-like proteases at both the N- and C-termini. As to expression, expressed in venom gland, cephalothorax, and abdomen tissues from both males and females.

It localises to the secreted. The protein localises to the target cell membrane. In terms of biological role, presynaptic neurotoxin that causes massive release of neurotransmitters from vertebrate (but not invertebrate) nerve terminals and endocrine cells via a complex mechanism involving activation of receptor(s) and toxin insertion into the plasma membrane with subsequent pore formation. Binds to neurexin-1-alpha (NRXN1) in a calcium dependent manner, adhesion G protein-coupled receptor L1 (ADGRL1, also termed latrophilin-1 and calcium-independent receptor of latrotoxin (CIRL)), and receptor-type tyrosine-protein phosphatase S (PTPRS), also termed PTP sigma. NRXN1 and PTPRS are suggested to provide a platform for binding and subsequent pore formation events. In contrast, binding to ADGRL1 does not involve oligomerization and channel formation, but direct downstream stimulation of the synaptic fusion machinery. This is Alpha-latrotoxin-Lhe1a from Latrodectus hesperus (Western black widow spider).